Reading from the N-terminus, the 248-residue chain is MADS-box transcription factor 8 (248 aa).

One can recognise an MADS-box domain in the interval 1–61 (MGRGRVELKR…GKLYEFCSGQ (61 aa)). The K-box domain maps to 90 to 180 (VQSSRNEYLK…RRKLEESNQL (91 aa)).

As to quaternary structure, may interact with the K-box of MADS6 and MADS16. May interact with MADS13 and MADS18. Binds to FCA. As to expression, expressed in lodicules, stamens and carpels.

It is found in the nucleus. In terms of biological role, probable transcription factor. May be involved in the control of flowering time. In Oryza sativa subsp. japonica (Rice), this protein is MADS-box transcription factor 8 (MADS8).